We begin with the raw amino-acid sequence, 198 residues long: Na(+)-translocating NADH-quinone reductase subunit E (198 aa).

Helical transmembrane passes span 11-31 (SIFIENMALSFFLGMCTFLAV), 39-59 (FGLGVAVIVVLTIAIPVNNLV), 77-97 (FLNFITFIGVIAALVQILEMI), 110-130 (GIFLPLITVNCAIFGGVSFMV), 140-160 (IVYGFGSGVGWMLAIVALAGI), and 176-196 (LGITFITVGLMALGFMSFSGV).

It belongs to the NqrDE/RnfAE family. In terms of assembly, composed of six subunits; NqrA, NqrB, NqrC, NqrD, NqrE and NqrF.

It is found in the cell inner membrane. The catalysed reaction is a ubiquinone + n Na(+)(in) + NADH + H(+) = a ubiquinol + n Na(+)(out) + NAD(+). Functionally, NQR complex catalyzes the reduction of ubiquinone-1 to ubiquinol by two successive reactions, coupled with the transport of Na(+) ions from the cytoplasm to the periplasm. NqrA to NqrE are probably involved in the second step, the conversion of ubisemiquinone to ubiquinol. The polypeptide is Na(+)-translocating NADH-quinone reductase subunit E (Photobacterium profundum (strain SS9)).